The primary structure comprises 277 residues: Phosphate import ATP-binding protein PstB 2 (277 aa).

In terms of domain architecture, ABC transporter spans 31-272 (IEVPGLSLFY…PAKKQTEDYI (242 aa)). Residue 63-70 (GPSGCGKS) coordinates ATP.

Belongs to the ABC transporter superfamily. Phosphate importer (TC 3.A.1.7) family. As to quaternary structure, the complex is composed of two ATP-binding proteins (PstB), two transmembrane proteins (PstC and PstA) and a solute-binding protein (PstS).

It is found in the cell inner membrane. The catalysed reaction is phosphate(out) + ATP + H2O = ADP + 2 phosphate(in) + H(+). Functionally, part of the ABC transporter complex PstSACB involved in phosphate import. Responsible for energy coupling to the transport system. In Pseudomonas putida (strain ATCC 47054 / DSM 6125 / CFBP 8728 / NCIMB 11950 / KT2440), this protein is Phosphate import ATP-binding protein PstB 2.